The chain runs to 311 residues: Ketoisovalerate oxidoreductase subunit VorB (311 aa).

Heterotetramer of one alpha, one beta, one delta and one gamma chain.

The enzyme catalyses 3-methyl-2-oxobutanoate + 2 oxidized [2Fe-2S]-[ferredoxin] + CoA = 2-methylpropanoyl-CoA + 2 reduced [2Fe-2S]-[ferredoxin] + CO2 + H(+). This chain is Ketoisovalerate oxidoreductase subunit VorB (vorB), found in Pyrococcus abyssi (strain GE5 / Orsay).